We begin with the raw amino-acid sequence, 492 residues long: MANYFNTLNLRQQLAQLGKCRFMARDEFADEAGYLKGKKVVIVGCGAQGLNQGLNMRDSGLDVAYALRKEAIAEKRASWRKATENGFKVGTYEELIPQADLVVNLTPDKQHSAVVKAVQPLMKEGAALGYSHGFNIVEVGEQVRKDITVVMVAPKCPGTEVREEYKRGFGVPTLIAVHPENDPKGEGMAIAKAWAAATGGHRAGVLESSFVAEVKSDLMGEQTILCGMLQAGSLLCFDKLVSEGTDAAYAEKLIQFGWETITEALKQGGITLMMDRLSNPAKLRAYALSEQLKEIMAPLFQKHMDDIISGAFSSGMMADWANDDVKLLNWREETGRTAFENAPQFEGKISEQEYFDHGVLMIAMVKAGVELAFETMVDSGIIEESAYYESLHELPLIANTIARKRLYEMNVVISDTAEYGNYLFANAAVPLLKEKFMDSLQAGDLGKSIPGSAVDNAQLRDVNEAIRNHPIEAVGHKLRGYMTDMKRIAVAG.

One can recognise a KARI N-terminal Rossmann domain in the interval 15 to 208 (AQLGKCRFMA…GGHRAGVLES (194 aa)). NADP(+) contacts are provided by residues 45 to 48 (CGAQ), Arg68, Arg76, Ser78, and 108 to 110 (DKQ). His132 is an active-site residue. Gly158 is an NADP(+) binding site. KARI C-terminal knotted domains lie at 209–344 (SFVA…NAPQ) and 345–485 (FEGK…MTDM). Residues Asp217, Glu221, Glu389, and Glu393 each contribute to the Mg(2+) site. Position 414 (Ser414) interacts with substrate.

This sequence belongs to the ketol-acid reductoisomerase family. The cofactor is Mg(2+).

It catalyses the reaction (2R)-2,3-dihydroxy-3-methylbutanoate + NADP(+) = (2S)-2-acetolactate + NADPH + H(+). It carries out the reaction (2R,3R)-2,3-dihydroxy-3-methylpentanoate + NADP(+) = (S)-2-ethyl-2-hydroxy-3-oxobutanoate + NADPH + H(+). The protein operates within amino-acid biosynthesis; L-isoleucine biosynthesis; L-isoleucine from 2-oxobutanoate: step 2/4. It functions in the pathway amino-acid biosynthesis; L-valine biosynthesis; L-valine from pyruvate: step 2/4. Involved in the biosynthesis of branched-chain amino acids (BCAA). Catalyzes an alkyl-migration followed by a ketol-acid reduction of (S)-2-acetolactate (S2AL) to yield (R)-2,3-dihydroxy-isovalerate. In the isomerase reaction, S2AL is rearranged via a Mg-dependent methyl migration to produce 3-hydroxy-3-methyl-2-ketobutyrate (HMKB). In the reductase reaction, this 2-ketoacid undergoes a metal-dependent reduction by NADPH to yield (R)-2,3-dihydroxy-isovalerate. The sequence is that of Ketol-acid reductoisomerase (NADP(+)) from Yersinia pseudotuberculosis serotype O:3 (strain YPIII).